A 616-amino-acid chain; its full sequence is Chaperone protein HscA (616 aa).

Belongs to the heat shock protein 70 family.

In terms of biological role, chaperone involved in the maturation of iron-sulfur cluster-containing proteins. Has a low intrinsic ATPase activity which is markedly stimulated by HscB. Involved in the maturation of IscU. This is Chaperone protein HscA from Shigella boydii serotype 18 (strain CDC 3083-94 / BS512).